The chain runs to 128 residues: KVYDRCEFARILKKSGMDGYRGVSLANWVCLAKWESDFNTKAINRNVGSTDYGIFQINSRYWCNDGKTPKAVNACHISCKVLLDDDLSQDIECAKRVVRDPQGIKAWVAWRTHCQNKDVSQYIRGCKL.

In terms of domain architecture, C-type lysozyme spans 1 to 128; it reads KVYDRCEFAR…VSQYIRGCKL (128 aa). 4 disulfide bridges follow: Cys6–Cys126, Cys30–Cys114, Cys63–Cys79, and Cys75–Cys93. Residues Glu35 and Asp51 contribute to the active site.

Belongs to the glycosyl hydrolase 22 family. As to quaternary structure, monomer.

It is found in the secreted. The enzyme catalyses Hydrolysis of (1-&gt;4)-beta-linkages between N-acetylmuramic acid and N-acetyl-D-glucosamine residues in a peptidoglycan and between N-acetyl-D-glucosamine residues in chitodextrins.. In terms of biological role, lysozymes have primarily a bacteriolytic function; those in tissues and body fluids are associated with the monocyte-macrophage system and enhance the activity of immunoagents. This chain is Lysozyme C-1, found in Sus scrofa (Pig).